The chain runs to 137 residues: Large ribosomal subunit protein uL16 (137 aa).

Residues 1–17 (MLQPKRTKFRKQMKGRN) are compositionally biased toward basic residues. The segment at 1–22 (MLQPKRTKFRKQMKGRNRGLAQ) is disordered.

This sequence belongs to the universal ribosomal protein uL16 family. As to quaternary structure, part of the 50S ribosomal subunit.

Functionally, binds 23S rRNA and is also seen to make contacts with the A and possibly P site tRNAs. The chain is Large ribosomal subunit protein uL16 from Teredinibacter turnerae (strain ATCC 39867 / T7901).